Here is a 122-residue protein sequence, read N- to C-terminus: uncharacterized protein (122 aa).

Disordered regions lie at residues 1–30 (MGRE…DQPE) and 96–122 (FKSC…DAMG).

This is an uncharacterized protein from Homo sapiens (Human).